Reading from the N-terminus, the 908-residue chain is SKI/DACH domain-containing protein 1 (908 aa).

The segment covering 337-353 (HHHHHHHHHHHHHHHRA) has biased composition (basic residues). Positions 337-461 (HHHHHHHHHH…SSSGSSQVSV (125 aa)) are disordered. Low complexity-rich tracts occupy residues 370-389 (PHLG…SSYS) and 396-410 (SDFG…NSVS). Positions 411–429 (SEEEEEEGEEEEEEEEEEG) are enriched in acidic residues. Low complexity predominate over residues 449–461 (ESDSSSGSSQVSV). A Glycyl lysine isopeptide (Lys-Gly) (interchain with G-Cter in SUMO2) cross-link involves residue lysine 688. Disordered stretches follow at residues 744 to 763 (ETPS…TLGS) and 792 to 818 (LQTP…TNEG). Polar residues predominate over residues 746 to 761 (PSLNPLAQSQGLSCTL).

It belongs to the DACH/dachshund family.

In Homo sapiens (Human), this protein is SKI/DACH domain-containing protein 1 (SKIDA1).